Reading from the N-terminus, the 969-residue chain is MFQLPVNNLTRLRKARKKVKRLLSDIGLDYCKEHVEDYKDVDPDDSDDSNESHLDLCTWDPTWTKSQDYRTKQFCCSDCPFASKYFSAYKNHFRNVHREDFESRILLNCSYCTYSGNKRTLETHVRLFHMPHNVMRQGVVGPHGAPVGAKDGMRVDKPMLGDRKELPVYYCKKCTYRDRLYNVVRRHIYREHFQHVATPYLGKNSEKQVNSGEAQANSHGIHCKSCHFTPRSYEALVQHVIEFHERIGHQVTAMIGHTNVIVPRLQTNPIQRGVPITSGVRPQTPQMNRFSMPKVVGLPVGNHFKQSLAGNSVPGQPVRVTLPDKAFVSSAVSHSHSGKHLGGFGVHGAAHLNAQSASFSPSLKSLPLSSSVHAATATLTSLQAKKASANALNTSQTQKWKICTICNELFPESAYSAHFEKEHQAEKVRAMAKYIMKIHNFTSKCLYCNRYLPSDSLLNHMLVHGLSCPHCHSTFHEVEKIVAHNRLAHPNEQGDQPTGSPLTFDLTLQQGNLKNVQLLVTTYNMKETPEAAAAAAAANQLSQNSAMPKPVKVSVRQPDTQSDSLVRNMSQSPVSQKKEVGKTLCPLCFTILKGPISDALAHHLRDSHQVLQTLHPVEKKLTYKCIHCLGVYTSNMTASTITLHLVHCRGVCQTPKGSKPITTGLRSPGAGSLKRELVTPDPSDPKRRKMVDQSRFYPTGFAEKPEEPIVLALDPKGYGDKSYEVRKAFLTAYFNRHPYPSQREVEKLAASLWLWKSDVASHFGNHRRLCDRDFTSRKPVVLLGFNMRLLSQIKHDMSFDDSCLFEVFDDEKSGYSRTSSFRLKSPIGFPADFIGSKQPLNTGQSSQSNCAFKTCPGSSSEPIAIDSDSDSELEVIPNENVSQHTPALRPSIVQSQTKGALLRESLRCERDVRANRSSPRVGPKVLDGSVSSSSPDEATWSGNMSSEESHYIPAGRFEVKGKKVGLLGR.

The C2H2-type 1 zinc finger occupies 74 to 97 (FCCSDCPFASKYFSAYKNHFRNVH). The segment at 107 to 129 (LNCSYCTYSGNKRTLETHVRLFH) adopts a C2H2-type 2; atypical zinc-finger fold. C2H2-type zinc fingers lie at residues 169 to 192 (YYCKKCTYRDRLYNVVRRHIYREH) and 221 to 244 (IHCKSCHFTPRSYEALVQHVIEFH). Residues 401-423 (KICTICNELFPESAYSAHFEKEH) form a C2H2-type 5; atypical zinc finger. Residues 443–464 (SKCLYCNRYLPSDSLLNHMLVH) form a C2H2-type 6; atypical zinc finger. A C2H2-type 7 zinc finger spans residues 466–489 (LSCPHCHSTFHEVEKIVAHNRLAH). The C2H2-type 8; atypical zinc finger occupies 583 to 608 (TLCPLCFTILKGPISDALAHHLRDSH). A C2H2-type 9; atypical zinc finger spans residues 623–647 (YKCIHCLGVYTSNMTASTITLHLVH). Residues 659-689 (KPITTGLRSPGAGSLKRELVTPDPSDPKRRK) are disordered. Positions 732–774 (AYFNRHPYPSQREVEKLAASLWLWKSDVASHFGNHRRLCDRDF) form a DNA-binding region, homeobox. A disordered region spans residues 911–949 (DVRANRSSPRVGPKVLDGSVSSSSPDEATWSGNMSSEES). Residues 929–946 (SVSSSSPDEATWSGNMSS) show a composition bias toward polar residues.

Interacts with catenin beta-1/ctnnb1.

It localises to the nucleus. May be involved in transcriptional regulation. Positively modulates wnt-beta-catenin/ctnnb1 signaling. Required for embryonic neurogenesis. Required for progression through late erythroid differentiation. This chain is Activity-dependent neuroprotective protein a, found in Danio rerio (Zebrafish).